The sequence spans 332 residues: Oxygen-dependent coproporphyrinogen-III oxidase (332 aa).

A coproporphyrinogen III-binding site is contributed by S119. H133 serves as the catalytic Proton donor. Residues 135–137 and 284–285 each bind coproporphyrinogen III; these read NVR and GR.

This sequence belongs to the aerobic coproporphyrinogen-III oxidase family. As to quaternary structure, homodimer.

It carries out the reaction coproporphyrinogen III + O2 + 2 H(+) = protoporphyrinogen IX + 2 CO2 + 2 H2O. It participates in porphyrin-containing compound metabolism; protoporphyrin-IX biosynthesis; protoporphyrinogen-IX from coproporphyrinogen-III (O2 route): step 1/1. Its function is as follows. Involved in the heme biosynthesis. Catalyzes the aerobic oxidative decarboxylation of propionate groups of rings A and B of coproporphyrinogen-III to yield the vinyl groups in protoporphyrinogen-IX. The polypeptide is Oxygen-dependent coproporphyrinogen-III oxidase (cpox) (Dictyostelium discoideum (Social amoeba)).